A 118-amino-acid chain; its full sequence is U-scoloptoxin(05)-Cw1a (118 aa).

The first 22 residues, 1 to 22 (MNPLNLSTFIVFTLFAASATTA), serve as a signal peptide directing secretion.

This sequence belongs to the scoloptoxin-05 family. In terms of processing, contains 5 disulfide bonds. Expressed by the venom gland.

Its subcellular location is the secreted. The sequence is that of U-scoloptoxin(05)-Cw1a from Cormocephalus westwoodi (Westwood's green centipede).